The primary structure comprises 416 residues: Tyrosine--tRNA ligase (416 aa).

Residue Y40 participates in L-tyrosine binding. Positions A45–H54 match the 'HIGH' region motif. Residues Y177 and Q181 each coordinate L-tyrosine. The 'KMSKS' region signature appears at K237–S241. K240 lines the ATP pocket. The S4 RNA-binding domain maps to L351–S416.

It belongs to the class-I aminoacyl-tRNA synthetase family. TyrS type 1 subfamily. Homodimer.

The protein resides in the cytoplasm. It carries out the reaction tRNA(Tyr) + L-tyrosine + ATP = L-tyrosyl-tRNA(Tyr) + AMP + diphosphate + H(+). Functionally, catalyzes the attachment of tyrosine to tRNA(Tyr) in a two-step reaction: tyrosine is first activated by ATP to form Tyr-AMP and then transferred to the acceptor end of tRNA(Tyr). The chain is Tyrosine--tRNA ligase from Cereibacter sphaeroides (strain KD131 / KCTC 12085) (Rhodobacter sphaeroides).